The following is a 241-amino-acid chain: NH(3)-dependent NAD(+) synthetase (241 aa).

An ATP-binding site is contributed by 29 to 36 (GISGGIDS). Asp-35 lines the Mg(2+) pocket. Arg-110 is a deamido-NAD(+) binding site. Glu-135 contributes to the Mg(2+) binding site. Deamido-NAD(+) contacts are provided by Lys-143 and Asp-150. 2 residues coordinate ATP: Lys-159 and Ser-181. 226–227 (HK) lines the deamido-NAD(+) pocket.

Belongs to the NAD synthetase family. As to quaternary structure, homodimer.

The catalysed reaction is deamido-NAD(+) + NH4(+) + ATP = AMP + diphosphate + NAD(+) + H(+). It functions in the pathway cofactor biosynthesis; NAD(+) biosynthesis; NAD(+) from deamido-NAD(+) (ammonia route): step 1/1. In terms of biological role, catalyzes the ATP-dependent amidation of deamido-NAD to form NAD. Uses ammonia as a nitrogen source. The protein is NH(3)-dependent NAD(+) synthetase of Finegoldia magna (strain ATCC 29328 / DSM 20472 / WAL 2508) (Peptostreptococcus magnus).